Here is a 339-residue protein sequence, read N- to C-terminus: MEMKEEIEAVKQQFHSELDQVNSSQALADLKVRYLGKKGIFRSFSEKLKQCTDKAKLGSLINDFKTYVEDLLQEKSLVLLASEQAEAFSKEKIDSSLPGDSQPSGGRHILKSILDDVVDIFVHLGFCVREAPNIESEANNFTLLNFTEDHPARQMHDTFYLNATTVLRTHTSNVQARELKKQQPPIKVVAPGLCFRNEDISARSHVLFHQVEAFYVDHNVTFSDLTAILSAFYHSFFQRKTELRFRHSYFPFVEPGIEVDVSCECCGKGCALCKHTGWLEVAGAGMIHPQVLRNGNVDPEIYSGYAVGMGIERLAMLKYGVSDIRLFSENDLRFLQQFS.

Glu254 provides a ligand contact to Mg(2+).

The protein belongs to the class-II aminoacyl-tRNA synthetase family. Phe-tRNA synthetase alpha subunit type 1 subfamily. In terms of assembly, tetramer of two alpha and two beta subunits. It depends on Mg(2+) as a cofactor.

The protein localises to the cytoplasm. It catalyses the reaction tRNA(Phe) + L-phenylalanine + ATP = L-phenylalanyl-tRNA(Phe) + AMP + diphosphate + H(+). The chain is Phenylalanine--tRNA ligase alpha subunit (pheS) from Chlamydia pneumoniae (Chlamydophila pneumoniae).